The primary structure comprises 1071 residues: ATP-dependent helicase/deoxyribonuclease subunit B (1071 aa).

This sequence belongs to the helicase family. AddB/RexB type 2 subfamily. In terms of assembly, heterodimer of AddA and RexB. Mg(2+) serves as cofactor.

Functionally, the heterodimer acts as both an ATP-dependent DNA helicase and an ATP-dependent, dual-direction single-stranded exonuclease. Recognizes the chi site generating a DNA molecule suitable for the initiation of homologous recombination. This subunit has 5' -&gt; 3' nuclease activity but not helicase activity. The protein is ATP-dependent helicase/deoxyribonuclease subunit B of Streptococcus pyogenes serotype M3 (strain ATCC BAA-595 / MGAS315).